The sequence spans 414 residues: tRNA dimethylallyltransferase (414 aa).

Position 33 to 40 (33 to 40 (APTASGKT)) interacts with ATP. Position 35–40 (35–40 (TASGKT)) interacts with substrate. Interaction with substrate tRNA stretches follow at residues 58–61 (DSAL), 182–186 (QRITR), and 266–271 (RCVGYR).

The protein belongs to the IPP transferase family. In terms of assembly, monomer. Requires Mg(2+) as cofactor.

The catalysed reaction is adenosine(37) in tRNA + dimethylallyl diphosphate = N(6)-dimethylallyladenosine(37) in tRNA + diphosphate. Functionally, catalyzes the transfer of a dimethylallyl group onto the adenine at position 37 in tRNAs that read codons beginning with uridine, leading to the formation of N6-(dimethylallyl)adenosine (i(6)A). This is tRNA dimethylallyltransferase from Psychrobacter cryohalolentis (strain ATCC BAA-1226 / DSM 17306 / VKM B-2378 / K5).